Consider the following 1499-residue polypeptide: Ring canal kelch homolog (1499 aa).

Over residues 56–66 (LDESSQKQLPR) the composition is skewed to polar residues. Residues 56–75 (LDESSQKQLPRSNGKEKTTG) form a disordered region. One can recognise a BTB domain in the interval 100–166 (CDVVLVAEGI…VYRAVVEVTE (67 aa)). Kelch repeat units follow at residues 351–396 (VLLV…VLGD), 397–443 (KVYA…VLNN), 444–490 (CIYA…VVNG), 492–539 (LYAV…VLDN), 541–586 (LYAV…AHNG), and 588–634 (LYVV…MIDK). Position 637 (Sec-637) is a non-standard amino acid, selenocysteine. Disordered regions lie at residues 679–714 (AGQA…GNNV), 750–786 (LQYA…GGGG), 825–856 (AGYD…CPNL), 984–1017 (NQSN…SSSV), 1033–1085 (SMNN…GNGG), 1107–1160 (ASTS…PVDV), 1301–1321 (QVGR…PLRT), and 1334–1499 (ARSP…TASE). Residues 698-713 (NPEPANSNNSAPNGNN) are compositionally biased toward low complexity. Residues 776–786 (GERGAVGGGGG) show a composition bias toward gly residues. Positions 986–1003 (SNSSSASSASPYGANGPA) are enriched in low complexity. Over residues 1004 to 1017 (TTSQPNPTKDSSSV) the composition is skewed to polar residues. A compositionally biased stretch (low complexity) spans 1040 to 1054 (SSAAHGTASGSAPAA). Gly residues predominate over residues 1065-1085 (ISGGASGGGAGGAGSSGGNGG). Residues 1107-1119 (ASTSTTLGGKSTG) show a composition bias toward low complexity. Over residues 1135–1147 (GPSDPTAGTSAPQ) the composition is skewed to polar residues. The span at 1348–1359 (NREKPREVRRIT) shows a compositional bias: basic and acidic residues. Low complexity predominate over residues 1401–1410 (SSASSSSDSD). The span at 1460–1471 (VGSSSNETSDSL) shows a compositional bias: polar residues.

It is found in the cytoplasm. The protein localises to the cytoskeleton. Its function is as follows. May play a role in organizing the actin cytoskeleton. This is Ring canal kelch homolog from Anopheles stephensi (Indo-Pakistan malaria mosquito).